The following is a 119-amino-acid chain: Integration host factor subunit alpha (119 aa).

A disordered region spans residues 96-119 (INGQQGSGKMNGEASHEQLSAEPE).

It belongs to the bacterial histone-like protein family. As to quaternary structure, heterodimer of an alpha and a beta chain.

Its function is as follows. This protein is one of the two subunits of integration host factor, a specific DNA-binding protein that functions in genetic recombination as well as in transcriptional and translational control. This is Integration host factor subunit alpha from Bradyrhizobium sp. (strain BTAi1 / ATCC BAA-1182).